The chain runs to 603 residues: Penicillin-binding protein activator LpoA (603 aa).

Positions 1 to 26 (MANMTPRKNSVTRLIAPVALALTLAA) are cleaved as a signal peptide. Residue C27 is the site of N-palmitoyl cysteine attachment. The S-diacylglycerol cysteine moiety is linked to residue C27.

It belongs to the LpoA family. In terms of assembly, interacts with PBP1a.

The protein resides in the cell outer membrane. Its function is as follows. Regulator of peptidoglycan synthesis that is essential for the function of penicillin-binding protein 1A (PBP1a). The sequence is that of Penicillin-binding protein activator LpoA from Aliivibrio fischeri (strain ATCC 700601 / ES114) (Vibrio fischeri).